A 264-amino-acid polypeptide reads, in one-letter code: Ribonuclease H (264 aa).

Residues 55–88 are disordered; it reads GSRYSSSSGPYRRSTTSYGYSPYSSSSSNYSARH. The span at 56–85 shows a compositional bias: low complexity; sequence SRYSSSSGPYRRSTTSYGYSPYSSSSSNYS. Residue S97 is modified to Phosphoserine. Residues 120–263 enclose the RNase H type-1 domain; that stretch reads CSDRQVVYAD…ADMLARRGAS (144 aa). Mg(2+) is bound by residues D129, E171, D191, and D255.

This sequence belongs to the RNase H family. Mg(2+) is required as a cofactor.

The enzyme catalyses Endonucleolytic cleavage to 5'-phosphomonoester.. In terms of biological role, endonuclease that specifically degrades the RNA of RNA-DNA hybrids. In Schizosaccharomyces pombe (strain 972 / ATCC 24843) (Fission yeast), this protein is Ribonuclease H (rnh1).